The chain runs to 347 residues: Haptoglobin (347 aa).

An N-terminal signal peptide occupies residues 1–18 (MSALGAVIALLLWGQLFA). A Sushi domain is found at 31 to 88 (DGCPKPPQIAHGYVEHSVRYQCKNYYRLRTEGDGVYTLNSEKQWINKAVGDKLPECEA). 4 disulfide bridges follow: C52/C86, C90/C207, C250/C281, and C292/C322. The Peptidase S1 domain occupies 103-347 (ILGGHLDAKG…DWVQKTIAKN (245 aa)). N-linked (GlcNAc...) asparagine glycosylation is found at N125, N148, N152, and N182. Residues 259-264 (VPEKKT) are interaction with CD163.

This sequence belongs to the peptidase S1 family. As to quaternary structure, tetramer of two alpha and two beta chains; disulfide-linked. The hemoglobin/haptoglobin complex is composed of a haptoglobin dimer bound to two hemoglobin alpha-beta dimers. Interacts with CD163. Interacts with ERGIC3.

It localises to the secreted. As a result of hemolysis, hemoglobin is found to accumulate in the kidney and is secreted in the urine. Haptoglobin captures, and combines with free plasma hemoglobin to allow hepatic recycling of heme iron and to prevent kidney damage. Haptoglobin also acts as an antioxidant, has antibacterial activity and plays a role in modulating many aspects of the acute phase response. Hemoglobin/haptoglobin complexes are rapidly cleared by the macrophage CD163 scavenger receptor expressed on the surface of liver Kupfer cells through an endocytic lysosomal degradation pathway. This chain is Haptoglobin (HP), found in Pongo abelii (Sumatran orangutan).